The chain runs to 222 residues: GMP/IMP nucleotidase YrfG (222 aa).

The active-site Nucleophile is Asp9. Residues Asp9 and Asp11 each contribute to the Mg(2+) site. Residues 9–11 (DVD) and Lys149 contribute to the substrate site. Asp174 contacts Mg(2+).

Belongs to the HAD-like hydrolase superfamily. Mg(2+) is required as a cofactor. Requires Mn(2+) as cofactor. Co(2+) serves as cofactor. It depends on Zn(2+) as a cofactor.

The catalysed reaction is a ribonucleoside 5'-phosphate + H2O = a ribonucleoside + phosphate. Functionally, catalyzes the dephosphorylation of different purine nucleotides (GMP and IMP). Also hydrolyzes flavin mononucleotide (FMN). The polypeptide is GMP/IMP nucleotidase YrfG (yrfG) (Escherichia coli (strain K12)).